Here is a 127-residue protein sequence, read N- to C-terminus: Glycine cleavage system H protein (127 aa).

One can recognise a Lipoyl-binding domain in the interval 22–104 (KARIGITHFA…YEKAWMIVVE (83 aa)). Lysine 63 is subject to N6-lipoyllysine.

Belongs to the GcvH family. As to quaternary structure, the glycine cleavage system is composed of four proteins: P, T, L and H. It depends on (R)-lipoate as a cofactor.

Its function is as follows. The glycine cleavage system catalyzes the degradation of glycine. The H protein shuttles the methylamine group of glycine from the P protein to the T protein. In terms of biological role, is also involved in protein lipoylation via its role as an octanoyl/lipoyl carrier protein intermediate. The polypeptide is Glycine cleavage system H protein (Bacillus subtilis (strain 168)).